The chain runs to 209 residues: Large ribosomal subunit protein bL25 (209 aa).

The segment at 190–209 is disordered; sequence LKSEEAASEGAAEEEAKDGE. A compositionally biased stretch (acidic residues) spans 200 to 209; that stretch reads AAEEEAKDGE.

This sequence belongs to the bacterial ribosomal protein bL25 family. CTC subfamily. Part of the 50S ribosomal subunit; part of the 5S rRNA/L5/L18/L25 subcomplex. Contacts the 5S rRNA. Binds to the 5S rRNA independently of L5 and L18.

Functionally, this is one of the proteins that binds to the 5S RNA in the ribosome where it forms part of the central protuberance. The chain is Large ribosomal subunit protein bL25 from Brucella anthropi (strain ATCC 49188 / DSM 6882 / CCUG 24695 / JCM 21032 / LMG 3331 / NBRC 15819 / NCTC 12168 / Alc 37) (Ochrobactrum anthropi).